The sequence spans 558 residues: MAIPGRQYGLILPKKTQQLHPVLQKPSVFGNDSDDDDETSVSESLQREAAKKQAMKQTKLEIQKALAEDATVYEYDSIYDEMQKKKEENNPKLLLGKDRKPKYIHNLLKAVEIRKKEQEKRMEKKIQREREMEKGEFDDKEAFVTSAYKKKLQERAEEEEREKRAAALEACLDVTKQKDLSGFYRHLLNQAVGEEEVPKCSFREARSGIKEEKSRGFSNEVSSKNRIPQEKCILQTDVKVEENPDADSDFDAKSSADDEIEETRVNCRREKVIETPENDFKHHRSQNHSRSPSEERGHSTRHHTKGSRTSRGHEKREDQHQQKQSRDQENHYTDRDYRKERDSHRHREASHRDSHWKRHEQEDKPRARDQRERSDRVWKREKDREKYSQREQERDRQQNDQNRPSEKGEKEEKSKAKEEHMKVRKERYENNDKYRDREKREVGVQSSERNQDRKESSPNSRAKDKFLDQERSNKMRNMAKDKERNQEKPSNSESSLGAKHRLTEEGQEKGKEQERPPEAVSKFAKRNNEETVMSARDRYLARQMARVNAKTYIEKEDD.

The disordered stretch occupies residues 21-54 (PVLQKPSVFGNDSDDDDETSVSESLQREAAKKQA). Phosphoserine occurs at positions 27 and 33. The stretch at 104-170 (IHNLLKAVEI…REKRAAALEA (67 aa)) forms a coiled coil. Residues 106 to 170 (NLLKAVEIRK…REKRAAALEA (65 aa)) form a necessary for alternative splicing activity region. Residues lysine 199 and lysine 210 each participate in a glycyl lysine isopeptide (Lys-Gly) (interchain with G-Cter in SUMO2) cross-link. Positions 204 to 215 (EARSGIKEEKSR) are enriched in basic and acidic residues. The tract at residues 204–534 (EARSGIKEEK…KRNNEETVMS (331 aa)) is disordered. Residues 216–226 (GFSNEVSSKNR) show a composition bias toward polar residues. Residues serine 248, serine 254, and serine 255 each carry the phosphoserine modification. Over residues 250–280 (FDAKSSADDEIEETRVNCRREKVIETPENDF) the composition is skewed to basic and acidic residues. At threonine 275 the chain carries Phosphothreonine. A Glycyl lysine isopeptide (Lys-Gly) (interchain with G-Cter in SUMO2) cross-link involves residue lysine 281. Residues 299-310 (STRHHTKGSRTS) are compositionally biased toward basic residues. 3 stretches are compositionally biased toward basic and acidic residues: residues 311 to 442 (RGHE…KREV), 449 to 487 (RNQDRKESSPNSRAKDKFLDQERSNKMRNMAKDKERNQE), and 501 to 517 (RLTEEGQEKGKEQERPP). Residues 379–427 (KREKDREKYSQREQERDRQQNDQNRPSEKGEKEEKSKAKEEHMKVRKER) are a coiled coil. Serine 457 bears the Phosphoserine mark.

The protein belongs to the NSRP1 family. As to quaternary structure, interacts (via C-terminus) with SRSF1. Interacts (via C-terminus) with SRSF2. In terms of tissue distribution, expressed in dendritic cells, T-cells, B-cells and natural killer cells. Expressed in secondary lymphoid organs such as spleen and mesenteric, axillary and brachial lymph nodes.

Its subcellular location is the nucleus. The protein localises to the nucleus speckle. Its function is as follows. RNA-binding protein that mediates pre-mRNA alternative splicing regulation. The chain is Nuclear speckle splicing regulatory protein 1 (NSRP1) from Homo sapiens (Human).